We begin with the raw amino-acid sequence, 831 residues long: uncharacterized protein (831 aa).

The interval 285 to 311 is disordered; the sequence is ALNLKRQQLKEEQKEQQSTGDRSDVST. ATP is bound at residue 470–477; it reads GDTGNGKS.

This is an uncharacterized protein from Bacillus subtilis (strain 168).